The sequence spans 78 residues: Large ribosomal subunit protein bL28 (78 aa).

Belongs to the bacterial ribosomal protein bL28 family.

The protein is Large ribosomal subunit protein bL28 of Klebsiella pneumoniae (strain 342).